Consider the following 194-residue polypeptide: uncharacterized protein (194 aa).

Disordered regions lie at residues 1 to 72 (MAAK…PAAE) and 113 to 194 (VLIP…SLAV). Basic and acidic residues predominate over residues 26–39 (AEGRSSEGRKERTA). Positions 146–171 (GSSSTSRNQVASLAYRTQNTAASQPR) are enriched in polar residues.

This is an uncharacterized protein from Homo sapiens (Human).